The primary structure comprises 314 residues: 2-oxo-3-(phosphooxy)propyl 3-oxoalkanoate synthase (314 aa).

Belongs to the AfsA family.

The catalysed reaction is a medium-chain 3-oxoacyl-[ACP] + dihydroxyacetone phosphate = a (4-alkanoyl-5-oxo-2,5-dihydrofuran-3-yl)methyl phosphate + holo-[ACP] + H2O. Involved of the biosynthesis of S.coelicolor butanolide 1 (SCB1), a gamma-butyrolactone that triggers antibiotic production. The sequence is that of 2-oxo-3-(phosphooxy)propyl 3-oxoalkanoate synthase from Streptomyces coelicolor (strain ATCC BAA-471 / A3(2) / M145).